The primary structure comprises 306 residues: Ribosomal RNA small subunit methyltransferase H (306 aa).

Residues 33-35 (GGY), aspartate 51, phenylalanine 82, aspartate 96, and glutamine 103 contribute to the S-adenosyl-L-methionine site.

Belongs to the methyltransferase superfamily. RsmH family.

Its subcellular location is the cytoplasm. It catalyses the reaction cytidine(1402) in 16S rRNA + S-adenosyl-L-methionine = N(4)-methylcytidine(1402) in 16S rRNA + S-adenosyl-L-homocysteine + H(+). Its function is as follows. Specifically methylates the N4 position of cytidine in position 1402 (C1402) of 16S rRNA. This is Ribosomal RNA small subunit methyltransferase H from Rickettsia akari (strain Hartford).